Consider the following 764-residue polypeptide: Complement factor B (764 aa).

An N-terminal signal peptide occupies residues 1–25; it reads MGSNLSPQLCLMPFILGLLSGGVTT. Sushi domains lie at 35–100, 101–160, and 163–220; these read GSCS…ECRA, IHCP…ICDN, and GYCS…SCQD. Cystine bridges form between Cys37-Cys76, Cys62-Cys98, Cys103-Cys145, Cys131-Cys158, Cys165-Cys205, and Cys191-Cys218. Residues Asn122 and Asn142 are each glycosylated (N-linked (GlcNAc...) asparagine). In terms of domain architecture, VWFA spans 270-469; the sequence is NIYLVLDGSD…NLEDVFYQMI (200 aa). Mg(2+) is bound by residues Ser278 and Ser280. The Mn(2+) site is built by Ser278 and Ser280. Asn285 is a glycosylation site (N-linked (GlcNAc...) asparagine). An N-linked (Glc) (glycation) lysine glycan is attached at Lys291. Residue Thr353 coordinates Mg(2+). Residue Thr353 participates in Mn(2+) binding. Asn378 carries N-linked (GlcNAc...) asparagine glycosylation. The Peptidase S1 domain occupies 477 to 757; it reads LCGMVWEHRK…VLPWLKEKLQ (281 aa). 5 disulfide bridges follow: Cys478–Cys596, Cys511–Cys527, Cys599–Cys615, Cys656–Cys682, and Cys695–Cys725. Catalysis depends on charge relay system residues His526 and Asp576. Catalysis depends on Ser699, which acts as the Charge relay system.

Belongs to the peptidase S1 family. Monomer. Interacts with complement C3b; this interaction is dependent on the presence of Mg(2+). As to quaternary structure, catalytic component of the C3 convertase of the alternative complement pathway, also named C3bBb, composed of complement factor B Bb and complement C3b. Catalytic component of the C5 convertase of the alternative complement pathway, also named C3bBb3b, composed of complement factor B Bb and additional molecules of complement C3b. Interacts to CFP; this interaction contributes to the stabilization of the active C3-convertase enzyme complex. Mg(2+) serves as cofactor. Mn(2+) is required as a cofactor. In terms of processing, cleaved by CFD following activation of the alternative complement system, generating Ba and Bb chains. Cleavage and activation takes place when CFB is already associated with complement C3b.

It localises to the secreted. The protein localises to the cell surface. It carries out the reaction Cleavage of Arg-|-Ser bond in complement component C3 alpha-chain to yield C3a and C3b, and Arg-|-Xaa bond in complement component C5 alpha-chain to yield C5a and C5b.. Its function is as follows. Precursor of the catalytic component of the C3 and C5 convertase complexes of the alternative pathway of the complement system, a cascade of proteins that leads to phagocytosis and breakdown of pathogens and signaling that strengthens the adaptive immune system. The alternative complement pathway acts as an amplification loop that enhances other complement pathways (classical, lectin and GZMK) by promoting formation of additional C3 and C5 convertases. CFB is cleaved and activated by CFD to generate Ba and Bb chains; Bb chain constituting the catalytic component of the C3 and C5 convertases. Functionally, serine protease component of the complement C3 and C5 convertase complexes of the alternative complement pathway. Following cleavage and activation by factor D (CFD), forms the C3 convertase together with complement C3b. As part of the C3 convertase, cleaves and activates C3 into C3a anaphylatoxin and C3b opsonin, the next components of the complement pathways. When an additional complement C3b molecule binds to the C3 convertase, forms the C5 convertase, which cleaves and activates C5 into C5a anaphylatoxin and C5b component of the membrane attack complex. Involved in proliferation and differentiation of preactivated B-lymphocytes, rapid spreading of peripheral blood monocytes, stimulation of lymphocyte blastogenesis and lysis of erythrocytes. The protein is Complement factor B of Homo sapiens (Human).